Here is a 181-residue protein sequence, read N- to C-terminus: Inner membrane-spanning protein YciB (181 aa).

The next 5 helical transmembrane spans lie at 10 to 30 (LIIF…GALI), 50 to 70 (MHLI…ILHD), 72 to 92 (SFIK…LGVS), 118 to 138 (VTWY…YVAF), and 148 to 168 (FKVF…VLYL).

Belongs to the YciB family.

Its subcellular location is the cell inner membrane. In terms of biological role, plays a role in cell envelope biogenesis, maintenance of cell envelope integrity and membrane homeostasis. The polypeptide is Inner membrane-spanning protein YciB (Shewanella halifaxensis (strain HAW-EB4)).